The chain runs to 1550 residues: Pentafunctional AROM polypeptide (1550 aa).

Positions 1 to 379 are 3-dehydroquinate synthase; sequence MSIERVPILG…YQLKAHQVSK (379 aa). Residues 42-44, 80-83, 111-113, and D116 each bind NAD(+); these read DTN, ENNK, and GGV. R127 is a 7-phospho-2-dehydro-3-deoxy-D-arabino-heptonate binding site. 136-137 contributes to the NAD(+) binding site; the sequence is TT. Residues D143 and K149 each contribute to the 7-phospho-2-dehydro-3-deoxy-D-arabino-heptonate site. K158 contacts NAD(+). N159 contributes to the 7-phospho-2-dehydro-3-deoxy-D-arabino-heptonate binding site. NAD(+)-binding positions include 176 to 179 and N187; that span reads FLET. Position 191 (E191) interacts with Zn(2+). Residues 191 to 194 and K243 contribute to the 7-phospho-2-dehydro-3-deoxy-D-arabino-heptonate site; that span reads EVVK. The active-site Proton acceptor; for 3-dehydroquinate synthase activity is the E253. Residues 257–261 and H264 contribute to the 7-phospho-2-dehydro-3-deoxy-D-arabino-heptonate site; that span reads RNLLN. Residue H264 participates in Zn(2+) binding. Residue H268 is the Proton acceptor; for 3-dehydroquinate synthase activity of the active site. 2 residues coordinate 7-phospho-2-dehydro-3-deoxy-D-arabino-heptonate: H280 and K351. H280 lines the Zn(2+) pocket. Residues 392–837 are EPSP synthase; that stretch reads VHPFTNPPKE…WDILHSKFKI (446 aa). Residues 857–1047 are shikimate kinase; sequence DKGVIVIGMR…VPTGRSTAVV (191 aa). 864 to 871 lines the ATP pocket; the sequence is GMRGTGKS. The tract at residues 1048–1257 is 3-dehydroquinase; sequence LTLPDLNNVA…NDDGLLTIGE (210 aa). The Schiff-base intermediate with substrate; for 3-dehydroquinate dehydratase activity role is filled by R1193. The shikimate dehydrogenase stretch occupies residues 1270-1550; the sequence is AKKFWVIGSP…EIIHRAVVEE (281 aa).

The protein in the N-terminal section; belongs to the sugar phosphate cyclases superfamily. Dehydroquinate synthase family. In the 2nd section; belongs to the EPSP synthase family. It in the 3rd section; belongs to the shikimate kinase family. This sequence in the 4th section; belongs to the type-I 3-dehydroquinase family. The protein in the C-terminal section; belongs to the shikimate dehydrogenase family. In terms of assembly, homodimer. Requires Zn(2+) as cofactor.

The protein localises to the cytoplasm. It catalyses the reaction 7-phospho-2-dehydro-3-deoxy-D-arabino-heptonate = 3-dehydroquinate + phosphate. It carries out the reaction 3-dehydroquinate = 3-dehydroshikimate + H2O. The catalysed reaction is shikimate + NADP(+) = 3-dehydroshikimate + NADPH + H(+). The enzyme catalyses shikimate + ATP = 3-phosphoshikimate + ADP + H(+). It catalyses the reaction 3-phosphoshikimate + phosphoenolpyruvate = 5-O-(1-carboxyvinyl)-3-phosphoshikimate + phosphate. Its pathway is metabolic intermediate biosynthesis; chorismate biosynthesis; chorismate from D-erythrose 4-phosphate and phosphoenolpyruvate: step 2/7. It functions in the pathway metabolic intermediate biosynthesis; chorismate biosynthesis; chorismate from D-erythrose 4-phosphate and phosphoenolpyruvate: step 3/7. The protein operates within metabolic intermediate biosynthesis; chorismate biosynthesis; chorismate from D-erythrose 4-phosphate and phosphoenolpyruvate: step 4/7. It participates in metabolic intermediate biosynthesis; chorismate biosynthesis; chorismate from D-erythrose 4-phosphate and phosphoenolpyruvate: step 5/7. Its pathway is metabolic intermediate biosynthesis; chorismate biosynthesis; chorismate from D-erythrose 4-phosphate and phosphoenolpyruvate: step 6/7. In terms of biological role, the AROM polypeptide catalyzes 5 consecutive enzymatic reactions in prechorismate polyaromatic amino acid biosynthesis. The polypeptide is Pentafunctional AROM polypeptide (Candida dubliniensis (strain CD36 / ATCC MYA-646 / CBS 7987 / NCPF 3949 / NRRL Y-17841) (Yeast)).